A 224-amino-acid polypeptide reads, in one-letter code: Ornithine decarboxylase antizyme (224 aa).

It belongs to the ODC antizyme family. As to quaternary structure, interacts with ODC and thereby sterically blocks ODC homodimerization.

In terms of biological role, ornithine decarboxylase (ODC) antizyme protein that negatively regulates ODC activity and intracellular polyamine biosynthesis in response to increased intracellular polyamine levels. Binds to ODC monomers, inhibiting the assembly of the functional ODC homodimer, and targets the monomers for ubiquitin-independent proteolytic destruction by the 26S proteasome. The sequence is that of Ornithine decarboxylase antizyme (spa1) from Schizosaccharomyces octosporus (Fission yeast).